A 404-amino-acid chain; its full sequence is Formate-dependent phosphoribosylglycinamide formyltransferase (404 aa).

N(1)-(5-phospho-beta-D-ribosyl)glycinamide is bound by residues 25 to 26 (EL) and Glu85. ATP-binding positions include Arg118, Lys159, 164–169 (SSGKGQ), 199–202 (EGFI), and Glu207. Residues 123 to 318 (RLAAEELGLP…EFELHARAIL (196 aa)) form the ATP-grasp domain. Residues Glu277 and Glu289 each contribute to the Mg(2+) site. Residues Asp296, Lys365, and 372-373 (RR) contribute to the N(1)-(5-phospho-beta-D-ribosyl)glycinamide site.

The protein belongs to the PurK/PurT family. As to quaternary structure, homodimer.

The catalysed reaction is N(1)-(5-phospho-beta-D-ribosyl)glycinamide + formate + ATP = N(2)-formyl-N(1)-(5-phospho-beta-D-ribosyl)glycinamide + ADP + phosphate + H(+). The protein operates within purine metabolism; IMP biosynthesis via de novo pathway; N(2)-formyl-N(1)-(5-phospho-D-ribosyl)glycinamide from N(1)-(5-phospho-D-ribosyl)glycinamide (formate route): step 1/1. Functionally, involved in the de novo purine biosynthesis. Catalyzes the transfer of formate to 5-phospho-ribosyl-glycinamide (GAR), producing 5-phospho-ribosyl-N-formylglycinamide (FGAR). Formate is provided by PurU via hydrolysis of 10-formyl-tetrahydrofolate. The sequence is that of Formate-dependent phosphoribosylglycinamide formyltransferase from Burkholderia lata (strain ATCC 17760 / DSM 23089 / LMG 22485 / NCIMB 9086 / R18194 / 383).